Here is a 499-residue protein sequence, read N- to C-terminus: Glutathione reductase, cytosolic (499 aa).

Ser-35, Gly-36, Glu-55, Thr-72, Cys-73, and Lys-81 together coordinate FAD. Residue Ser-35 participates in glutathione binding. Cys-73 and Cys-78 are oxidised to a cystine. Glutathione is bound at residue Tyr-130. An FAD-binding site is contributed by Gly-146. NADP(+) contacts are provided by Gly-211, Ile-214, Glu-217, Arg-234, Arg-240, and Gly-297. The FAD site is built by Asp-338 and Thr-346. Ala-376 is a binding site for NADP(+). Residue His-472 coordinates FAD. Catalysis depends on His-472, which acts as the Proton acceptor.

The protein belongs to the class-I pyridine nucleotide-disulfide oxidoreductase family. As to quaternary structure, homodimer. The cofactor is FAD.

The protein resides in the cytoplasm. It catalyses the reaction 2 glutathione + NADP(+) = glutathione disulfide + NADPH + H(+). In terms of biological role, catalyzes the reduction of glutathione disulfide (GSSG) to reduced glutathione (GSH). Constitutes the major mechanism to maintain a high GSH:GSSG ratio in the cytosol. This chain is Glutathione reductase, cytosolic, found in Arabidopsis thaliana (Mouse-ear cress).